A 199-amino-acid polypeptide reads, in one-letter code: MIGKLNGKIDSHCDDYVIIDVNGVGYLVYASGKTLAKLVEGKFYKLFIETHVREEHIHLYGFLTLEEKNFFNLLQSVNGIGTKMALSILSNLTPTDIQIAINNDDRNIFKAISGVGAKLAERIMLELKDKITKIFSSSAIIKDSNISSIAINEVMKALVNLGFTRFEAQNTVQGIITQNPKISIDELIKTALKNRNSSF.

Residues 1–63 form a domain I region; sequence MIGKLNGKID…EEHIHLYGFL (63 aa). The domain II stretch occupies residues 64-141; it reads TLEEKNFFNL…TKIFSSSAII (78 aa). Residues 141–145 form a flexible linker region; that stretch reads IKDSN. The interval 146 to 199 is domain III; the sequence is ISSIAINEVMKALVNLGFTRFEAQNTVQGIITQNPKISIDELIKTALKNRNSSF.

Belongs to the RuvA family. As to quaternary structure, homotetramer. Forms an RuvA(8)-RuvB(12)-Holliday junction (HJ) complex. HJ DNA is sandwiched between 2 RuvA tetramers; dsDNA enters through RuvA and exits via RuvB. An RuvB hexamer assembles on each DNA strand where it exits the tetramer. Each RuvB hexamer is contacted by two RuvA subunits (via domain III) on 2 adjacent RuvB subunits; this complex drives branch migration. In the full resolvosome a probable DNA-RuvA(4)-RuvB(12)-RuvC(2) complex forms which resolves the HJ.

It is found in the cytoplasm. Functionally, the RuvA-RuvB-RuvC complex processes Holliday junction (HJ) DNA during genetic recombination and DNA repair, while the RuvA-RuvB complex plays an important role in the rescue of blocked DNA replication forks via replication fork reversal (RFR). RuvA specifically binds to HJ cruciform DNA, conferring on it an open structure. The RuvB hexamer acts as an ATP-dependent pump, pulling dsDNA into and through the RuvAB complex. HJ branch migration allows RuvC to scan DNA until it finds its consensus sequence, where it cleaves and resolves the cruciform DNA. The polypeptide is Holliday junction branch migration complex subunit RuvA (Rickettsia prowazekii (strain Madrid E)).